We begin with the raw amino-acid sequence, 450 residues long: Magnesium transporter MgtE (450 aa).

Over 1-283 (MEEKLAVSLQ…SEAGPVALWL (283 aa)) the chain is Cytoplasmic. Residues Glu-59, Asp-91, Asp-95, and Gly-136 each coordinate Mg(2+). 2 CBS domains span residues 138–200 (MTPE…RVAE) and 202–258 (MNPK…EATE). ATP contacts are provided by Tyr-170, Ser-185, Arg-187, Asp-188, and Val-207. 8 residues coordinate Mg(2+): Glu-216, Ala-223, Asp-226, Asp-247, Asp-250, Glu-255, Glu-258, and Asp-259. Ca(2+) is bound at residue Glu-275. Mn(2+) contacts are provided by Glu-275, Gln-304, Glu-307, and Glu-311. Residues 284–306 (ARVRWLVILILTGMVTSSILQGF) form a helical membrane-spanning segment. At 307–315 (ESVLEAVTA) the chain is on the periplasmic side. Glu-311 serves as a coordination point for Ca(2+). The chain crosses the membrane as a helical span at residues 316–337 (LAFYVPVLLGTGGNTGNQSATL). Over 338-351 (IIRALATRDLDLRD) the chain is Cytoplasmic. A helical membrane pass occupies residues 352–381 (WRRVFLKEMGVGLLLGLTLSFLLVGKVYWD). The Periplasmic portion of the chain corresponds to 382 to 385 (GHPL). His-383 lines the Mn(2+) pocket. The chain crosses the membrane as a helical span at residues 386-409 (LLPVVGVSLVLIVFFANLVGAMLP). Over 410–420 (FLLRRLGVDPA) the chain is Cytoplasmic. The Mg(2+) site is built by Asp-418, Ala-428, and Asp-432. A helical membrane pass occupies residues 421 to 443 (LVSNPLVATLSDVTGLLIYLSVA). Residues 444–450 (RLLLEAV) are Periplasmic-facing.

Belongs to the SLC41A transporter family. In terms of assembly, homodimer.

It localises to the cell inner membrane. It catalyses the reaction Mg(2+)(in) = Mg(2+)(out). Its activity is regulated as follows. The channel activity is regulated via the N-terminal cytoplasmic region, which acts as a Mg(2+) sensor to regulate the gating of the ion-conducting pore in response to the intracellular magnesium concentration. Under high-intracellular magnesium conditions, binding of magnesium to the N-terminal cytoplasmic domain stabilizes the closed conformation of the channel. Under low-intracellular magnesium conditions, the channel is in equilibrium between the open and closed states. A cation-binding site within the membrane (M1) strictly recognizes the size and geometry of the Mg(2+) hydration shells, which may be important for the selective transport of Mg(2+) over other cations. Cation-binding sites on the periplasmic side (M2 and M3) regulate channel opening and prevent conduction of near-cognate cations. Binding of Mn(2+) to the periplasmic sites strongly inhibits the Mg(2+) transport activity. In addition, activity is regulated by ATP, which binds to MgtE and modulates its Mg(2+)-dependent channel gating. ATP binding enhances the intracellular domain affinity for Mg(2+) within physiological concentrations of this divalent cation, enabling MgtE to function as an in vivo Mg(2+) sensor. ATP dissociation from MgtE upregulates Mg(2+) influx at both high and low intracellular Mg(2+) concentrations. Its function is as follows. Highly selective magnesium channel that plays an important role in Mg(2+) homeostasis. Functions as a Mg(2+)-dependent gating channel. Exhibits low activity with cobalt, suggesting that it might also be involved in the uptake of Co(2+) as a micronutrient. Also exhibits low activity with Ca(2+), but it shows almost no activity with Mn(2+). The sequence is that of Magnesium transporter MgtE from Thermus thermophilus (strain ATCC 27634 / DSM 579 / HB8).